A 445-amino-acid chain; its full sequence is 3-phosphoshikimate 1-carboxyvinyltransferase (445 aa).

The tract at residues 1–20 (MSTSAAPTPLESRASGPLSG) is disordered. Lysine 28, serine 29, and arginine 33 together coordinate 3-phosphoshikimate. Lysine 28 contacts phosphoenolpyruvate. Residues glycine 101 and arginine 129 each contribute to the phosphoenolpyruvate site. Residues serine 175, glutamine 177, aspartate 328, and lysine 355 each contribute to the 3-phosphoshikimate site. Phosphoenolpyruvate is bound at residue glutamine 177. The active-site Proton acceptor is the aspartate 328. Phosphoenolpyruvate contacts are provided by arginine 359 and arginine 402.

Belongs to the EPSP synthase family. In terms of assembly, monomer.

Its subcellular location is the cytoplasm. The catalysed reaction is 3-phosphoshikimate + phosphoenolpyruvate = 5-O-(1-carboxyvinyl)-3-phosphoshikimate + phosphate. The protein operates within metabolic intermediate biosynthesis; chorismate biosynthesis; chorismate from D-erythrose 4-phosphate and phosphoenolpyruvate: step 6/7. Catalyzes the transfer of the enolpyruvyl moiety of phosphoenolpyruvate (PEP) to the 5-hydroxyl of shikimate-3-phosphate (S3P) to produce enolpyruvyl shikimate-3-phosphate and inorganic phosphate. This is 3-phosphoshikimate 1-carboxyvinyltransferase from Bradyrhizobium sp. (strain ORS 278).